The primary structure comprises 189 residues: Thymidine kinase (189 aa).

ATP is bound by residues 9-16 and 85-88; these read GTMNSGKT and DESQ. Glutamate 86 acts as the Proton acceptor in catalysis. Zn(2+) contacts are provided by cysteine 143, cysteine 146, cysteine 180, and histidine 183.

The protein belongs to the thymidine kinase family. Homotetramer.

Its subcellular location is the cytoplasm. It carries out the reaction thymidine + ATP = dTMP + ADP + H(+). The chain is Thymidine kinase from Streptococcus pyogenes serotype M18 (strain MGAS8232).